The chain runs to 180 residues: Oligoribonuclease (180 aa).

The 164-residue stretch at 7 to 170 folds into the Exonuclease domain; sequence LIWIDLEMTG…DDIRESIAEL (164 aa). Residue tyrosine 128 is part of the active site.

The protein belongs to the oligoribonuclease family.

Its subcellular location is the cytoplasm. Its function is as follows. 3'-to-5' exoribonuclease specific for small oligoribonucleotides. The sequence is that of Oligoribonuclease from Pseudomonas fluorescens (strain Pf0-1).